We begin with the raw amino-acid sequence, 268 residues long: Phosphatidylglycerol--prolipoprotein diacylglyceryl transferase (268 aa).

A run of 4 helical transmembrane segments spans residues 14–34, 57–77, 90–110, and 117–137; these read LGPIKIHWYGLMYLLGIFAGW, LTFYVALGVILGGRIGYIIFY, FFLWDGGMSFHGGFIGVLIAF, and IGANFFDLGEFVAPVIPIGLG. Arg-140 provides a ligand contact to a 1,2-diacyl-sn-glycero-3-phospho-(1'-sn-glycerol). The next 3 membrane-spanning stretches (helical) occupy residues 174–194, 200–220, and 238–258; these read QLFEFFFEGVVLFSVLWLVTI, YLVLGLFMFLYGCARFICEFF, and GQILSIPMILLGAVILIAVFI.

The protein belongs to the Lgt family.

The protein resides in the cell inner membrane. It catalyses the reaction L-cysteinyl-[prolipoprotein] + a 1,2-diacyl-sn-glycero-3-phospho-(1'-sn-glycerol) = an S-1,2-diacyl-sn-glyceryl-L-cysteinyl-[prolipoprotein] + sn-glycerol 1-phosphate + H(+). It participates in protein modification; lipoprotein biosynthesis (diacylglyceryl transfer). Catalyzes the transfer of the diacylglyceryl group from phosphatidylglycerol to the sulfhydryl group of the N-terminal cysteine of a prolipoprotein, the first step in the formation of mature lipoproteins. The chain is Phosphatidylglycerol--prolipoprotein diacylglyceryl transferase from Francisella tularensis subsp. novicida (strain U112).